The chain runs to 153 residues: Transcriptional repressor NrdR (153 aa).

A zinc finger lies at 3–34 (CPFCNSTDTQVKDSRSIENDMLIRRRRVCLVC). The 91-residue stretch at 49-139 (FMVVKKNGET…VYMNFRNIND (91 aa)) folds into the ATP-cone domain.

Belongs to the NrdR family. The cofactor is Zn(2+).

Its function is as follows. Negatively regulates transcription of bacterial ribonucleotide reductase nrd genes and operons by binding to NrdR-boxes. The polypeptide is Transcriptional repressor NrdR (Ehrlichia chaffeensis (strain ATCC CRL-10679 / Arkansas)).